The primary structure comprises 366 residues: Carbamoyl phosphate synthase small chain (366 aa).

Residues 1 to 170 (MLKKRYLVLE…TKSPYVSTGY (170 aa)) are CPSase. L-glutamine is bound by residues Ser47, Gly221, and Gly223. The 188-residue stretch at 173-360 (SVVLVDFGKK…IDMINEYKTK (188 aa)) folds into the Glutamine amidotransferase type-1 domain. The Nucleophile role is filled by Cys248. Residues Leu249, Gln252, Asn290, Gly292, and Tyr293 each contribute to the L-glutamine site. Residues His333 and Glu335 contribute to the active site.

The protein belongs to the CarA family. Composed of two chains; the small (or glutamine) chain promotes the hydrolysis of glutamine to ammonia, which is used by the large (or ammonia) chain to synthesize carbamoyl phosphate. Tetramer of heterodimers (alpha,beta)4.

It carries out the reaction hydrogencarbonate + L-glutamine + 2 ATP + H2O = carbamoyl phosphate + L-glutamate + 2 ADP + phosphate + 2 H(+). It catalyses the reaction L-glutamine + H2O = L-glutamate + NH4(+). It functions in the pathway amino-acid biosynthesis; L-arginine biosynthesis; carbamoyl phosphate from bicarbonate: step 1/1. It participates in pyrimidine metabolism; UMP biosynthesis via de novo pathway; (S)-dihydroorotate from bicarbonate: step 1/3. In terms of biological role, small subunit of the glutamine-dependent carbamoyl phosphate synthetase (CPSase). CPSase catalyzes the formation of carbamoyl phosphate from the ammonia moiety of glutamine, carbonate, and phosphate donated by ATP, constituting the first step of 2 biosynthetic pathways, one leading to arginine and/or urea and the other to pyrimidine nucleotides. The small subunit (glutamine amidotransferase) binds and cleaves glutamine to supply the large subunit with the substrate ammonia. The polypeptide is Carbamoyl phosphate synthase small chain (Staphylococcus saprophyticus subsp. saprophyticus (strain ATCC 15305 / DSM 20229 / NCIMB 8711 / NCTC 7292 / S-41)).